A 235-amino-acid chain; its full sequence is Thaumatin II (235 aa).

A signal peptide spans 1 to 22 (MAATTCFFFLFPFLLLLTLSRA). Intrachain disulfides connect Cys-31-Cys-226, Cys-78-Cys-88, Cys-93-Cys-99, Cys-143-Cys-215, Cys-148-Cys-199, Cys-156-Cys-167, Cys-171-Cys-180, and Cys-181-Cys-186. A propeptide spans 230 to 235 (LELEDE) (removed in mature form).

This sequence belongs to the thaumatin family.

It localises to the cytoplasmic vesicle. Its function is as follows. Taste-modifying protein; intensely sweet-tasting. It is 100000 times sweeter than sucrose on a molar basis. The sequence is that of Thaumatin II from Thaumatococcus daniellii (Katemfe).